The primary structure comprises 436 residues: 3-ketoacyl-CoA thiolase (436 aa).

Catalysis depends on C99, which acts as the Acyl-thioester intermediate. Active-site proton acceptor residues include H392 and C422.

It belongs to the thiolase-like superfamily. Thiolase family. As to quaternary structure, heterotetramer of two alpha chains (FadJ) and two beta chains (FadI).

It is found in the cytoplasm. It catalyses the reaction an acyl-CoA + acetyl-CoA = a 3-oxoacyl-CoA + CoA. The protein operates within lipid metabolism; fatty acid beta-oxidation. Catalyzes the final step of fatty acid oxidation in which acetyl-CoA is released and the CoA ester of a fatty acid two carbons shorter is formed. This Salmonella typhi protein is 3-ketoacyl-CoA thiolase.